We begin with the raw amino-acid sequence, 226 residues long: Ribonuclease 3 (226 aa).

Residues 6-128 form the RNase III domain; that stretch reads INKLQRKLGY…LIGGVFLDSD (123 aa). Mg(2+) is bound at residue glutamate 41. Aspartate 45 is a catalytic residue. Aspartate 114 and glutamate 117 together coordinate Mg(2+). The active site involves glutamate 117. Positions 155–225 constitute a DRBM domain; sequence DPKTRLQEFL…AEQALIKLGI (71 aa).

It belongs to the ribonuclease III family. Homodimer. It depends on Mg(2+) as a cofactor.

It is found in the cytoplasm. The catalysed reaction is Endonucleolytic cleavage to 5'-phosphomonoester.. Functionally, digests double-stranded RNA. Involved in the processing of primary rRNA transcript to yield the immediate precursors to the large and small rRNAs (23S and 16S). Processes some mRNAs, and tRNAs when they are encoded in the rRNA operon. Processes pre-crRNA and tracrRNA of type II CRISPR loci if present in the organism. This is Ribonuclease 3 from Erwinia tasmaniensis (strain DSM 17950 / CFBP 7177 / CIP 109463 / NCPPB 4357 / Et1/99).